A 1571-amino-acid polypeptide reads, in one-letter code: Guanine nucleotide-releasing factor 2 (1571 aa).

3 disordered regions span residues 28–85, 202–271, and 287–316; these read LPPH…RDTN, INSG…KLAR, and MRTT…PTTE. Basic residues predominate over residues 55–73; the sequence is QLHHHHHQQHHHNHHRLWK. The span at 74-83 shows a compositional bias: polar residues; sequence TQRQSWSPRD. The span at 230-248 shows a compositional bias: gly residues; that stretch reads TPGGSSRVGGAGAGGGGGV. Polar residues predominate over residues 287–297; that stretch reads MRTTNNTLGRS. Residues 298–309 show a composition bias toward basic residues; the sequence is HSPHSPRTKHGT. Phosphoserine occurs at positions 496 and 523. Disordered regions lie at residues 513 to 580, 614 to 646, 695 to 719, 728 to 747, 776 to 868, and 879 to 898; these read HNVN…QASP, RSRS…HQHL, GEGV…ESGF, STQT…SSNS, QRHI…SEVA, and LNHH…HSKH. The residue at position 524 (T524) is a Phosphothreonine. A Phosphoserine modification is found at S526. Residues 532–550 show a composition bias toward pro residues; that stretch reads SPPPKPPLPNRASNPPPLP. The SH3-binding signature appears at 546-556; the sequence is PPPLPPKRRSQ. A compositionally biased stretch (low complexity) spans 556–579; the sequence is QPSASAGTVGVGCSSSTSTSNQAS. S615 carries the post-translational modification Phosphoserine. Residues 620-631 are compositionally biased toward polar residues; sequence ENSQCSFDSALN. Positions 697-707 are enriched in low complexity; sequence GVAAAASGDGE. Positions 708 to 718 are enriched in polar residues; that stretch reads TNSNRHSNESG. 2 stretches are compositionally biased toward low complexity: residues 735–747 and 780–824; these read SVQS…SSNS and SSSS…DLAP. An SH3-binding motif is present at residues 820 to 831; sequence ADLAPALPPKSI. A compositionally biased stretch (polar residues) spans 851–866; it reads VQSSSGWASHRSSQSE. 2 consecutive short sequence motifs (SH3-binding) follow at residues 924-935 and 986-997; these read DQEPPPLPIKKK and LEMPPALPPKNY. The segment at 1013–1038 is disordered; that stretch reads PVIVTTPPPSPKPTLGENGSTGRPDS. Residues 1170 to 1292 enclose the N-terminal Ras-GEF domain; it reads DGPEVKGGYI…LRNKFVEKVT (123 aa). The Ras-GEF domain occupies 1339–1564; it reads KSLEIAEQMT…WQISEKIKPR (226 aa).

In terms of tissue distribution, ubiquitous.

In terms of biological role, guanine nucleotide-releasing protein that binds to SH3 domain of Crk. Transduces signals from Crk to activate RAS. Also involved in MAPK activation. In Drosophila melanogaster (Fruit fly), this protein is Guanine nucleotide-releasing factor 2 (C3G).